A 264-amino-acid chain; its full sequence is Glutamate racemase (264 aa).

Substrate is bound by residues 10-11 (DS) and 42-43 (YG). The Proton donor/acceptor role is filled by Cys73. Residue 74 to 75 (NT) participates in substrate binding. Cys183 acts as the Proton donor/acceptor in catalysis. 184–185 (TH) contacts substrate.

The protein belongs to the aspartate/glutamate racemases family.

It catalyses the reaction L-glutamate = D-glutamate. Its pathway is cell wall biogenesis; peptidoglycan biosynthesis. Its function is as follows. Provides the (R)-glutamate required for cell wall biosynthesis. This Streptococcus pyogenes serotype M18 (strain MGAS8232) protein is Glutamate racemase.